An 82-amino-acid polypeptide reads, in one-letter code: RNA-binding protein Hfq (82 aa).

One can recognise a Sm domain in the interval Asp11–Ile71.

The protein belongs to the Hfq family. Homohexamer.

Functionally, RNA chaperone that binds small regulatory RNA (sRNAs) and mRNAs to facilitate mRNA translational regulation in response to envelope stress, environmental stress and changes in metabolite concentrations. Also binds with high specificity to tRNAs. The polypeptide is RNA-binding protein Hfq (Rhodopseudomonas palustris (strain TIE-1)).